Here is a 233-residue protein sequence, read N- to C-terminus: MSVLTSIRKSLVPIHREGYPFIAIAVVIAIGLLSVSTFFGMLAVGLAIWTALFFRDPQRVTPLREGLVVAPADGRISQIGLALPPRELGLSEVPLLRISIFMNVFNVHVNRAPVTGRIEKIAYKPGLFLNAELDKASEDNERNGLIIHGPNGVVGVVQIAGLIARRIVSFVHEGETIGAGERFGLIRFGSRVDVYLPVGTRVLVSEGQLTVAGETILADYDAAPTRDIAFRVS.

Catalysis depends on serine 190, which acts as the Schiff-base intermediate with substrate; via pyruvic acid. Serine 190 carries the post-translational modification Pyruvic acid (Ser); by autocatalysis.

This sequence belongs to the phosphatidylserine decarboxylase family. PSD-A subfamily. In terms of assembly, heterodimer of a large membrane-associated beta subunit and a small pyruvoyl-containing alpha subunit. It depends on pyruvate as a cofactor. In terms of processing, is synthesized initially as an inactive proenzyme. Formation of the active enzyme involves a self-maturation process in which the active site pyruvoyl group is generated from an internal serine residue via an autocatalytic post-translational modification. Two non-identical subunits are generated from the proenzyme in this reaction, and the pyruvate is formed at the N-terminus of the alpha chain, which is derived from the carboxyl end of the proenzyme. The post-translation cleavage follows an unusual pathway, termed non-hydrolytic serinolysis, in which the side chain hydroxyl group of the serine supplies its oxygen atom to form the C-terminus of the beta chain, while the remainder of the serine residue undergoes an oxidative deamination to produce ammonia and the pyruvoyl prosthetic group on the alpha chain.

The protein localises to the cell membrane. The enzyme catalyses a 1,2-diacyl-sn-glycero-3-phospho-L-serine + H(+) = a 1,2-diacyl-sn-glycero-3-phosphoethanolamine + CO2. It participates in phospholipid metabolism; phosphatidylethanolamine biosynthesis; phosphatidylethanolamine from CDP-diacylglycerol: step 2/2. Its function is as follows. Catalyzes the formation of phosphatidylethanolamine (PtdEtn) from phosphatidylserine (PtdSer). This chain is Phosphatidylserine decarboxylase proenzyme, found in Azorhizobium caulinodans (strain ATCC 43989 / DSM 5975 / JCM 20966 / LMG 6465 / NBRC 14845 / NCIMB 13405 / ORS 571).